The primary structure comprises 936 residues: 2-oxoglutarate dehydrogenase E1 component (936 aa).

It belongs to the alpha-ketoglutarate dehydrogenase family. As to quaternary structure, homodimer. Part of the 2-oxoglutarate dehydrogenase (OGDH) complex composed of E1 (2-oxoglutarate dehydrogenase), E2 (dihydrolipoamide succinyltransferase) and E3 (dihydrolipoamide dehydrogenase); the complex contains multiple copies of the three enzymatic components (E1, E2 and E3). Thiamine diphosphate serves as cofactor.

It catalyses the reaction N(6)-[(R)-lipoyl]-L-lysyl-[protein] + 2-oxoglutarate + H(+) = N(6)-[(R)-S(8)-succinyldihydrolipoyl]-L-lysyl-[protein] + CO2. In terms of biological role, E1 component of the 2-oxoglutarate dehydrogenase (OGDH) complex which catalyzes the decarboxylation of 2-oxoglutarate, the first step in the conversion of 2-oxoglutarate to succinyl-CoA and CO(2). This chain is 2-oxoglutarate dehydrogenase E1 component (sucA), found in Rickettsia prowazekii (strain Madrid E).